The chain runs to 904 residues: uncharacterized protein (904 aa).

Disordered stretches follow at residues 247 to 275 (KIGKSRTTEDVSMPPLHRGVGTPANSLEF) and 328 to 360 (GDSQTPGLHYPPTAGAQTLSPTSHPSSANHHFS). Positions 342–360 (GAQTLSPTSHPSSANHHFS) are enriched in polar residues. A helical transmembrane segment spans residues 778–798 (VVQGMILMFAGGKLIFGGRVL).

It is found in the membrane. This is an uncharacterized protein from Homo sapiens (Human).